A 359-amino-acid polypeptide reads, in one-letter code: Peptide chain release factor 1 (359 aa).

Residue Gln-236 is modified to N5-methylglutamine.

This sequence belongs to the prokaryotic/mitochondrial release factor family. Methylated by PrmC. Methylation increases the termination efficiency of RF1.

Its subcellular location is the cytoplasm. In terms of biological role, peptide chain release factor 1 directs the termination of translation in response to the peptide chain termination codons UAG and UAA. The sequence is that of Peptide chain release factor 1 from Streptococcus thermophilus (strain ATCC BAA-250 / LMG 18311).